The following is a 276-amino-acid chain: Syntaxin-12 (276 aa).

Ser2 bears the N-acetylserine mark. Residues 2–248 (SYGPLDMYRN…RAAYYQKKSR (247 aa)) lie on the Cytoplasmic side of the membrane. Residues 33-131 (IQRISQATAQ…RRVSEKEKES (99 aa)) are a coiled coil. Residues Ser139, Ser142, Ser218, and Ser225 each carry the phosphoserine modification. In terms of domain architecture, t-SNARE coiled-coil homology spans 178 to 240 (LELIKERETA…ERATEQLQRA (63 aa)). Residues 249 to 269 (KKMCILVLVLSVIILILGLII) form a helical; Anchor for type IV membrane protein membrane-spanning segment. The Vesicular portion of the chain corresponds to 270–276 (WLVYKTK).

It belongs to the syntaxin family. In terms of assembly, interacts with NAPA and SNAP23. Identified in a complex containing STX6, STX12, VAMP4 and VTI1A. Associates with the BLOC-1 complex. Interacts with BLOC1S6. Interacts with GRIPAP1. Forms a complex with GRIP1, GRIA2 and NSG1; controls the intracellular fate of AMPAR and the endosomal sorting of the GRIA2 subunit toward recycling and membrane targeting. Interacts with NSG1. Interacts with TPC1. Interacts (via N-terminus) with VPS13B.

The protein resides in the endosome membrane. Its subcellular location is the golgi apparatus membrane. The protein localises to the endomembrane system. It localises to the early endosome membrane. It is found in the recycling endosome membrane. SNARE promoting fusion of transport vesicles with target membranes. Together with SNARE STX6, promotes movement of vesicles from endosomes to the cell membrane, and may therefore function in the endocytic recycling pathway. Through complex formation with GRIP1, GRIA2 and NSG1 controls the intracellular fate of AMPAR and the endosomal sorting of the GRIA2 subunit toward recycling and membrane targeting. The sequence is that of Syntaxin-12 (STX12) from Homo sapiens (Human).